Here is a 188-residue protein sequence, read N- to C-terminus: Large ribosomal subunit protein bL35m (188 aa).

It belongs to the bacterial ribosomal protein bL35 family.

It is found in the mitochondrion. The protein is Large ribosomal subunit protein bL35m (Mrpl35) of Mus musculus (Mouse).